The following is a 207-amino-acid chain: Claudin-11 (207 aa).

M1 is a topological domain (cytoplasmic). A helical transmembrane segment spans residues 2–22 (VATCLQVVGFVTSFVGWIGII). Residues 23–82 (VTTSTNDWVVTCGYTIPTCRKLDELGSKGLWADCVMATGLYHCKPLVDILILPGYVQACR) lie on the Extracellular side of the membrane. Residues 83–103 (ALMIAASVLGLPAILLLLTVL) traverse the membrane as a helical segment. The Cytoplasmic segment spans residues 104-122 (PCIRMGHEPGVAKYRRAQL). Residues 123 to 143 (AGVMLVLVALCAMVATIWFPV) form a helical membrane-spanning segment. Over 144 to 157 (CAHRETTIVSFGYS) the chain is Extracellular. Residues 158–178 (LYAGWIGAVLCLVGGCVIVCC) form a helical membrane-spanning segment. The Cytoplasmic portion of the chain corresponds to 179-207 (AGDAQAFGENRFYYSSGSSSPTHAKSAHV). A phosphoserine mark is found at S193, S194, S197, and S198.

The protein belongs to the claudin family. Interacts with tetraspanin-3/TSPAN3. Interacts with OCLN.

The protein resides in the cell junction. The protein localises to the tight junction. It is found in the cell membrane. In terms of biological role, plays a major role in tight junction-specific obliteration of the intercellular space, through calcium-independent cell-adhesion activity. In Bos taurus (Bovine), this protein is Claudin-11 (CLDN11).